We begin with the raw amino-acid sequence, 679 residues long: Stress-70 protein, mitochondrial (679 aa).

The N-terminal 46 residues, 1 to 46 (MISASRAAAARLVGAAASRGPTAARHQDSWNGLSHEAFRLVSRRDY), are a transit peptide targeting the mitochondrion. The interaction with NFS1 stretch occupies residues 1–432 (MISASRAAAA…IQGGVLAGDV (432 aa)). ADP-binding residues include Thr-63 and Asn-64. The nucleotide-binding domain (NBD) stretch occupies residues 63 to 431 (TNSCVAVMEG…AIQGGVLAGD (369 aa)). N6-acetyllysine is present on Lys-76. The residue at position 87 (Thr-87) is a Phosphothreonine. An N6-acetyllysine; alternate mark is found at Lys-135 and Lys-138. N6-succinyllysine; alternate is present on residues Lys-135 and Lys-138. Residue Lys-143 is modified to N6-acetyllysine. N6-acetyllysine; alternate is present on Lys-206. Position 206 is an N6-succinyllysine; alternate (Lys-206). Lys-206 bears the N6-malonyllysine; alternate mark. 2 positions are modified to N6-acetyllysine: Lys-234 and Lys-288. Lys-300 is subject to N6-acetyllysine; alternate. At Lys-300 the chain carries N6-succinyllysine; alternate. 3 residues coordinate ADP: Glu-313, Lys-316, and Ser-320. At Lys-368 the chain carries N6-succinyllysine. ADP is bound by residues Gly-388 and Arg-391. Lys-394 carries the N6-succinyllysine modification. Ser-408 carries the post-translational modification Phosphoserine. Residues 432–441 (VTDVLLLDVT) form an interdomain linker region. Residues 432–679 (VTDVLLLDVT…QKEDQKEEKQ (248 aa)) are interaction with FXN and ISCU. Residues 442-679 (PLSLGIETLG…QKEDQKEEKQ (238 aa)) are substrate-binding domain (SBD). At Arg-513 the chain carries Omega-N-methylarginine. 2 positions are modified to N6-acetyllysine; alternate: Lys-567 and Lys-600. Lys-567 and Lys-600 each carry N6-succinyllysine; alternate. At Lys-610 the chain carries N6-succinyllysine. The residue at position 612 (Lys-612) is an N6-acetyllysine. Lys-646 carries the post-translational modification N6-acetyllysine; alternate. Lys-646 is subject to N6-succinyllysine; alternate. Residues 656–679 (ASEREGSGSSGTGEQKEDQKEEKQ) are disordered. The span at 669-679 (EQKEDQKEEKQ) shows a compositional bias: basic and acidic residues.

Belongs to the heat shock protein 70 family. In terms of assembly, interacts strongly with the intermediate form of FXN and weakly with its mature form. Interacts with HSCB. Associates with the mitochondrial contact site and cristae organizing system (MICOS) complex, composed of at least MICOS10/MIC10, CHCHD3/MIC19, CHCHD6/MIC25, APOOL/MIC27, IMMT/MIC60, APOO/MIC23/MIC26 and QIL1/MIC13. This complex was also known under the names MINOS or MitOS complex. The MICOS complex associates with mitochondrial outer membrane proteins SAMM50, MTX1, MTX2 and DNAJC11, mitochondrial inner membrane protein TMEM11 and with HSPA9. Interacts with DNLZ, the interaction is required to prevent self-aggregation. Interacts with TESPA1. Interacts with PDPN. Interacts with NFU1, NFS1 and ISCU. Interacts with TP53; the interaction promotes TP53 degradation. Interacts (via SBD domain) with UBXN2A; the interaction with UBXN2A inhibits HSPA9 interaction with and degradation of TP53, thereby promotes TP53 translocation to the nucleus. Interacts with ITPR1 AND VDAC1; this interaction couples ITPR1 to VDAC1. Component of the TIM23 mitochondrial inner membrane pre-sequence translocase complex.

It is found in the mitochondrion. It localises to the nucleus. The protein resides in the nucleolus. Its subcellular location is the cytoplasm. The protein localises to the mitochondrion matrix. It catalyses the reaction ATP + H2O = ADP + phosphate + H(+). Its activity is regulated as follows. The chaperone activity is regulated by ATP-induced allosteric coupling of the nucleotide-binding (NBD) and substrate-binding (SBD) domains. ATP binding in the NBD leads to a conformational change in the NBD, which is transferred through the interdomain linker (IDL) to the substrate-binding domain (SBD). This elicits a reduced substrate affinity and a faster substrate exchange rate. Upon hydrolysis of ATP to ADP, the protein undergoes a conformational change that increases its affinity for substrate proteins. It cycles through repeated phases of ATP hydrolysis and nucleotide exchange, facilitating repeated cycles of substrate binding and release. Functions in collaboration with co-chaperones. Functions with the co-chaperone, DNLZ, to maintain solubility and regulate ATP hydrolysis. Nucleotide exchange factors, GRPEL1 and GRPEL2, accelerate nucleotide exchange. Its function is as follows. Mitochondrial chaperone that plays a key role in mitochondrial protein import, folding, and assembly. Plays an essential role in the protein quality control system, the correct folding of proteins, the re-folding of misfolded proteins, and the targeting of proteins for subsequent degradation. These processes are achieved through cycles of ATP binding, ATP hydrolysis, and ADP release, mediated by co-chaperones. In mitochondria, it associates with the TIM (translocase of the inner membrane) protein complex to assist in the import and folding of mitochondrial proteins. Plays an important role in mitochondrial iron-sulfur cluster (ISC) biogenesis, interacts with and stabilizes ISC cluster assembly proteins FXN, NFU1, NFS1 and ISCU. Regulates erythropoiesis via stabilization of ISC assembly. Regulates mitochondrial calcium-dependent apoptosis by coupling two calcium channels, ITPR1 and VDAC1, at the mitochondria-associated endoplasmic reticulum (ER) membrane to facilitate calcium transport from the ER lumen to the mitochondria intermembrane space, providing calcium for the downstream calcium channel MCU, which releases it into the mitochondrial matrix. Although primarily located in the mitochondria, it is also found in other cellular compartments. In the cytosol, it associates with proteins involved in signaling, apoptosis, or senescence. It may play a role in cell cycle regulation via its interaction with and promotion of degradation of TP53. May play a role in the control of cell proliferation and cellular aging. Protects against reactive oxygen species (ROS). Extracellular HSPA9 plays a cytoprotective role by preventing cell lysis following immune attack by the membrane attack complex by disrupting formation of the complex. The sequence is that of Stress-70 protein, mitochondrial from Homo sapiens (Human).